The following is a 159-amino-acid chain: Endoribonuclease YbeY (159 aa).

Positions 114, 118, and 124 each coordinate Zn(2+).

It belongs to the endoribonuclease YbeY family. Zn(2+) is required as a cofactor.

Its subcellular location is the cytoplasm. Its function is as follows. Single strand-specific metallo-endoribonuclease involved in late-stage 70S ribosome quality control and in maturation of the 3' terminus of the 16S rRNA. The polypeptide is Endoribonuclease YbeY (Pectobacterium atrosepticum (strain SCRI 1043 / ATCC BAA-672) (Erwinia carotovora subsp. atroseptica)).